Reading from the N-terminus, the 542-residue chain is Probable quinate permease (542 aa).

Over 1-22 (MSILALVEDRPTPKEVYNWKIY) the chain is Cytoplasmic. A helical transmembrane segment spans residues 23–43 (LLAAVASFTSCMIGYDSAFIG). Topologically, residues 44–74 (TTLALSSFREEFGFSTMSKTAVNLVSANIVS) are extracellular. Residues 75–95 (CYQAGAFFGAFFAYPIGHFWG) form a helical membrane-spanning segment. At 96–97 (RK) the chain is on the cytoplasmic side. Residues 98 to 118 (WGLLFAGTIFTLGAGLMLGAN) traverse the membrane as a helical segment. At 119 to 130 (GDRGLGLLYGGR) the chain is on the extracellular side. Residues 131-151 (VLAGLGVGAGSNITPIYISEM) form a helical membrane-spanning segment. Topologically, residues 152 to 159 (APPSIRGR) are cytoplasmic. Residues 160–180 (LVGVYELGWQIGGLVGFWINY) traverse the membrane as a helical segment. The Extracellular segment spans residues 181–193 (GVSETLAPSHKQW). The chain crosses the membrane as a helical span at residues 194–214 (IIPFAVQLIPSGLLLIGAVFL). Residues 215–285 (KESPRWLFSR…AGTNKKVMYR (71 aa)) lie on the Cytoplasmic side of the membrane. Residues 286–306 (LFLGSMLFFWQNGSGINAINY) traverse the membrane as a helical segment. The Extracellular segment spans residues 307 to 325 (YSPTVFKSIGLHGANTSMF). The helical transmembrane segment at 326–346 (STGIFGVVKTVVTFVWLLYLI) threads the bilayer. The Cytoplasmic portion of the chain corresponds to 347-352 (DRVGRR). A helical membrane pass occupies residues 353-373 (LLLLIGAAGAAVCLLIVGAYI). The Extracellular segment spans residues 374 to 387 (KIADPASNPTQEMT). A helical transmembrane segment spans residues 388–408 (GGGIAAMFFFYLYTVFYTPSW). Topologically, residues 409-456 (NGTPWVMNSEMFEPNMRSLAQACAAASNWLWNFLISRFTPQMFAKMEY) are cytoplasmic. A helical transmembrane segment spans residues 457 to 477 (GVWFFFASLMLLSIVFVFFLV). At 478-542 (PETKGIPLES…EHVSEDLPKV (65 aa)) the chain is on the extracellular side. Positions 523-542 (GYSKTGEQQVEHVSEDLPKV) are disordered. Over residues 531–542 (QVEHVSEDLPKV) the composition is skewed to basic and acidic residues.

Belongs to the major facilitator superfamily. Sugar transporter (TC 2.A.1.1) family. In terms of assembly, interacts with creB. Ubiquitinated. Deubiquitinated by creB, probably to control its activity or amount.

It is found in the cell membrane. Its function is as follows. Integral membrane transporter that imports quinic acid to be catabolized as a carbon source. The protein is Probable quinate permease (qutD) of Aspergillus fumigatus (strain ATCC MYA-4609 / CBS 101355 / FGSC A1100 / Af293) (Neosartorya fumigata).